The chain runs to 411 residues: Lissencephaly-1 homolog (411 aa).

In terms of domain architecture, LisH spans 9–41 (QREELNQAIADYLGSNGYGDSLETFRKEADVST). A coiled-coil region spans residues 56 to 83 (TSVIRLQKKVMELEAKLTEAEKEVIEGA). WD repeat units lie at residues 106 to 147 (GHRA…RSLK), 148 to 187 (GHTDSVQDVAFDSQGKLLASCSADLSIKLWDFQQSYECVK), 191 to 230 (GHDHNVSSVAFVPAGDYVLSASRDRTIKMWEVATGYCVKT), 233 to 272 (GHREWVRMVRVHIEGSIFATCSNDHTIRVWLMNSKDCKVE), 275 to 334 (DHEH…CLLT), 337 to 376 (GHDNWVRGLAFHPGGKYLVSASDDKTIRVWDLRNKRCMKT), and 379 to 411 (AHQHFCTSIDFHKAHPYVISGSVDQTVKVWECR).

Belongs to the WD repeat LIS1/nudF family.

Its subcellular location is the cytoplasm. The protein resides in the cytoskeleton. It is found in the microtubule organizing center. It localises to the centrosome. In terms of biological role, positively regulates the activity of the minus-end directed microtubule motor protein dynein. May enhance dynein-mediated microtubule sliding by targeting dynein to the microtubule plus end. Required for several dynein- and microtubule-dependent processes. In Drosophila persimilis (Fruit fly), this protein is Lissencephaly-1 homolog.